The chain runs to 854 residues: DNA mismatch repair protein MutS (854 aa).

An ATP-binding site is contributed by 615–622; it reads GPNMGGKS.

This sequence belongs to the DNA mismatch repair MutS family.

This protein is involved in the repair of mismatches in DNA. It is possible that it carries out the mismatch recognition step. This protein has a weak ATPase activity. The polypeptide is DNA mismatch repair protein MutS (Aliivibrio fischeri (strain MJ11) (Vibrio fischeri)).